The chain runs to 291 residues: uncharacterized protein (291 aa).

4 helical membrane-spanning segments follow: residues 13-33 (IILI…SITI), 84-104 (IVLF…IGII), 111-131 (LLHL…FIII), and 219-239 (LIYC…IYYL).

The protein resides in the cell membrane. This is an uncharacterized protein from Ureaplasma parvum serovar 3 (strain ATCC 700970).